The primary structure comprises 736 residues: 1,4-alpha-glucan branching enzyme GlgB (736 aa).

The active-site Nucleophile is aspartate 415. Glutamate 470 acts as the Proton donor in catalysis.

Belongs to the glycosyl hydrolase 13 family. GlgB subfamily. In terms of assembly, monomer.

The catalysed reaction is Transfers a segment of a (1-&gt;4)-alpha-D-glucan chain to a primary hydroxy group in a similar glucan chain.. Its pathway is glycan biosynthesis; glycogen biosynthesis. In terms of biological role, catalyzes the formation of the alpha-1,6-glucosidic linkages in glycogen by scission of a 1,4-alpha-linked oligosaccharide from growing alpha-1,4-glucan chains and the subsequent attachment of the oligosaccharide to the alpha-1,6 position. This chain is 1,4-alpha-glucan branching enzyme GlgB, found in Burkholderia cenocepacia (strain HI2424).